A 400-amino-acid chain; its full sequence is Hyaluronidase (400 aa).

The first 19 residues, 1-19 (MQTILVLTTFLSAWFLAVG), serve as a signal peptide directing secretion. 5 disulfide bridges follow: cysteine 31–cysteine 319, cysteine 196–cysteine 209, cysteine 344–cysteine 355, cysteine 349–cysteine 384, and cysteine 386–cysteine 395. The Proton donor role is filled by glutamate 120. Residues asparagine 129 and asparagine 166 are each glycosylated (N-linked (GlcNAc...) asparagine). Residues asparagine 243 and asparagine 275 are each glycosylated (N-linked (GlcNAc...) asparagine). The EGF-like domain maps to 340-396 (NVARCSKQACSGRGRCTWPKDTSVIAWKFLVEKEDYDFYLGDIECKCVEGYEGRYCE).

This sequence belongs to the glycosyl hydrolase 56 family. As to quaternary structure, monomer. Expressed by the venom gland.

Its subcellular location is the secreted. It catalyses the reaction Random hydrolysis of (1-&gt;4)-linkages between N-acetyl-beta-D-glucosamine and D-glucuronate residues in hyaluronate.. In terms of biological role, spider venom endo-hyaluronidase that is able to degrade purified hyaluronic acid (HA) and chondroitin sulfate (CS). Has no activity on dermatan sulfate (DS) and heparan sulfate (HS). Also increases the dermonecrotic effect of the dermonecrotic toxin (AC P0CE80), when injected in rabbit skin, supporting the hypothesis that venom hyaluronidases are spreading factors. In Loxosceles intermedia (Brown spider), this protein is Hyaluronidase.